A 650-amino-acid polypeptide reads, in one-letter code: Chaperone protein DnaK (650 aa).

Position 200 is a phosphothreonine; by autocatalysis (threonine 200). The disordered stretch occupies residues glutamine 613 to glutamine 634.

The protein belongs to the heat shock protein 70 family.

Acts as a chaperone. In Burkholderia vietnamiensis (strain G4 / LMG 22486) (Burkholderia cepacia (strain R1808)), this protein is Chaperone protein DnaK.